Here is a 1211-residue protein sequence, read N- to C-terminus: RNA helicase Mov10l1 (1211 aa).

Disordered stretches follow at residues 340–385 (KENS…GENG) and 674–710 (WNHA…RVGD). 2 stretches are compositionally biased toward polar residues: residues 345–372 (DENI…NNRG) and 674–688 (WNHA…QSTS). The span at 694–710 (TMTDQAEHGTEERRVGD) shows a compositional bias: basic and acidic residues. 770-777 (GPPGTGKT) is a binding site for ATP. The short motif at 886–889 (DEAG) is the DEAG box element. The disordered stretch occupies residues 1192 to 1211 (DPSYPVVPESTGPEKHQEPS).

Belongs to the DNA2/NAM7 helicase family. SDE3 subfamily. In terms of assembly, interacts with PIWIL1. Interacts with PIWIL2. Interacts with PIWIL4. Interacts with HSPA2. Interacts with PLD6. In terms of tissue distribution, specifically expressed in testis.

It localises to the cytoplasm. The enzyme catalyses ATP + H2O = ADP + phosphate + H(+). Its function is as follows. ATP-dependent RNA helicase required during spermatogenesis to repress transposable elements and prevent their mobilization, which is essential for germline integrity. Acts via the piRNA metabolic process, which mediates the repression of transposable elements during meiosis by forming complexes composed of piRNAs and Piwi proteins and governs the methylation and subsequent repression of transposons. Involved in the primary piRNA metabolic process. Specifically binds to piRNA precursors and promotes the generation of intermediate piRNA processing fragments that are subsequently loaded to Piwi proteins. Acts via its ATP-dependent RNA helicase activity: displays 5'-3' RNA unwinding activity and probably mediates unwinding and funneling of single-stranded piRNA precursor transcripts to the endonuclease that catalyzes the first cleavage step of piRNA processing to generate piRNA intermediate fragments that are subsequently loaded to Piwi proteins. The sequence is that of RNA helicase Mov10l1 from Homo sapiens (Human).